The following is a 97-amino-acid chain: Large ribosomal subunit protein eL21 (97 aa).

This sequence belongs to the eukaryotic ribosomal protein eL21 family.

This chain is Large ribosomal subunit protein eL21, found in Methanococcus vannielii (strain ATCC 35089 / DSM 1224 / JCM 13029 / OCM 148 / SB).